A 592-amino-acid polypeptide reads, in one-letter code: Protein kinase C zeta type (592 aa).

In terms of domain architecture, PB1 spans 15–98 (RVRLKAHYGG…EVLIIHVFPS (84 aa)). An interaction with SQSTM1 region spans residues 79–145 (AFRLACQGRD…KRFNRRAYCG (67 aa)). Residues 130–180 (GHLFQAKRFNRRAYCGQCSERIWGLARQGYRCINCKLLVHKRCHVLVPLTC) form a Phorbol-ester/DAG-type zinc finger. A Protein kinase domain is found at 252–518 (FDLIRVIGRG…FSDIKSHAFF (267 aa)). ATP is bound by residues 258–266 (IGRGSYAKV) and lysine 281. Aspartate 376 acts as the Proton acceptor in catalysis. Threonine 410 is modified (phosphothreonine; by PDPK1 and PI3K). The region spanning 519-590 (RSIDWDLLEK…INPLLLSAEE (72 aa)) is the AGC-kinase C-terminal domain. Threonine 560 carries the post-translational modification Phosphothreonine. Serine 591 is subject to Phosphoserine.

It belongs to the protein kinase superfamily. AGC Ser/Thr protein kinase family. PKC subfamily. In terms of assembly, interacts with PARD6A, PARD6B and PARD6G. Part of a complex with PARD3, PARD6A or PARD6B or PARD6G and CDC42 or RAC1. Interacts with ADAP1/CENTA1. Forms a ternary complex with SQSTM1 and KCNAB2. Forms another ternary complex with SQSTM1 and GABRR3. Forms a complex with SQSTM1 and MAP2K5. Interacts (via the protein kinase domain) with WWC1. Forms a tripartite complex with WWC1 and DDR1, but predominantly in the absence of collagen. Component of the Par polarity complex, composed of at least phosphorylated PRKCZ, PARD3 and TIAM1. Interacts with PDPK1 (via N-terminal region). Interacts with WDFY2 (via WD repeats 1-3). Interacts with VAMP2. Forms a complex with WDFY2 and VAMP2. Interacts with APPL1. Interacts with WWC1, WWC2 and WWC3. In terms of processing, CDH5 is required for its phosphorylation at Thr-410. Phosphorylated by protein kinase PDPK1; phosphorylation is inhibited by the apoptotic C-terminal cleavage product of PKN2. Phosphorylation at Thr-410 by PI3K activates the kinase. Isoform 1: In brain, expressed in hippocampus, neocortex and cerebellum (at protein level). Also expressed in lung, liver, kidney, testis and to a lesser extent in pancreas, intestine and skin (at protein level). Isoform 2: Specifically expressed in brain where it localizes to the hippocampus, neocortex and cerebellum (at protein level).

It localises to the cytoplasm. The protein resides in the endosome. The protein localises to the cell junction. It is found in the membrane. It catalyses the reaction L-seryl-[protein] + ATP = O-phospho-L-seryl-[protein] + ADP + H(+). It carries out the reaction L-threonyl-[protein] + ATP = O-phospho-L-threonyl-[protein] + ADP + H(+). Its activity is regulated as follows. Atypical PKCs (PRKCI and PRKCZ) exhibit an elevated basal enzymatic activity (that may be due to the interaction with SMG1 or SQSTM1) and are not regulated by diacylglycerol, phosphatidylserine, phorbol esters or calcium ions. Two specific sites, Thr-410 (activation loop of the kinase domain) and Thr-560 (turn motif), need to be phosphorylated for its full activation. Phosphatidylinositol 3,4,5-trisphosphate might be a physiological activator. Isoform 2: Constitutively active. Its function is as follows. Calcium- and diacylglycerol-independent serine/threonine-protein kinase that functions in phosphatidylinositol 3-kinase (PI3K) pathway and mitogen-activated protein (MAP) kinase cascade, and is involved in NF-kappa-B activation, mitogenic signaling, cell proliferation, cell polarity, inflammatory response and maintenance of long-term potentiation (LTP). Upon lipopolysaccharide (LPS) treatment in macrophages, or following mitogenic stimuli, functions downstream of PI3K to activate MAP2K1/MEK1-MAPK1/ERK2 signaling cascade independently of RAF1 activation. Required for insulin-dependent activation of AKT3, but may function as an adapter rather than a direct activator. Upon insulin treatment may act as a downstream effector of PI3K and contribute to the activation of translocation of the glucose transporter SLC2A4/GLUT4 and subsequent glucose transport in adipocytes. In EGF-induced cells, binds and activates MAP2K5/MEK5-MAPK7/ERK5 independently of its kinase activity and can activate JUN promoter through MEF2C. Through binding with SQSTM1/p62, functions in interleukin-1 signaling and activation of NF-kappa-B with the specific adapters RIPK1 and TRAF6. Participates in TNF-dependent transactivation of NF-kappa-B by phosphorylating and activating IKBKB kinase, which in turn leads to the degradation of NF-kappa-B inhibitors. In migrating astrocytes, forms a cytoplasmic complex with PARD6A and is recruited by CDC42 to function in the establishment of cell polarity along with the microtubule motor and dynein. In association with FEZ1, stimulates neuronal differentiation in PC12 cells. In the inflammatory response, is required for the T-helper 2 (Th2) differentiation process, including interleukin production, efficient activation of JAK1 and the subsequent phosphorylation and nuclear translocation of STAT6. May be involved in development of allergic airway inflammation (asthma), a process dependent on Th2 immune response. In the NF-kappa-B-mediated inflammatory response, can relieve SETD6-dependent repression of NF-kappa-B target genes by phosphorylating the RELA subunit at 'Ser-311'. Phosphorylates VAMP2 in vitro. Phosphorylates and activates LRRK1, which phosphorylates RAB proteins involved in intracellular trafficking. In terms of biological role, involved in late synaptic long term potentiation phase in CA1 hippocampal cells and long term memory maintenance. The polypeptide is Protein kinase C zeta type (Prkcz) (Rattus norvegicus (Rat)).